We begin with the raw amino-acid sequence, 878 residues long: Alanine--tRNA ligase (878 aa).

The Zn(2+) site is built by His-567, His-571, Cys-669, and His-673.

Belongs to the class-II aminoacyl-tRNA synthetase family. Zn(2+) serves as cofactor.

The protein resides in the cytoplasm. It carries out the reaction tRNA(Ala) + L-alanine + ATP = L-alanyl-tRNA(Ala) + AMP + diphosphate. Catalyzes the attachment of alanine to tRNA(Ala) in a two-step reaction: alanine is first activated by ATP to form Ala-AMP and then transferred to the acceptor end of tRNA(Ala). Also edits incorrectly charged Ser-tRNA(Ala) and Gly-tRNA(Ala) via its editing domain. The chain is Alanine--tRNA ligase from Rickettsia felis (strain ATCC VR-1525 / URRWXCal2) (Rickettsia azadi).